A 326-amino-acid chain; its full sequence is Flap endonuclease 1 (326 aa).

Residues 1–98 form an N-domain region; it reads MGVQFGDFIP…KTRKVRREMK (98 aa). Mg(2+) is bound by residues Asp-27, Asp-80, Glu-152, Glu-154, Asp-173, Asp-175, and Asp-224. Positions 116-245 are I-domain; sequence EAAKYAKRVS…KRAYELVRSG (130 aa). The segment at 317–325 is interaction with PCNA; the sequence is KQKTLDAWF.

It belongs to the XPG/RAD2 endonuclease family. FEN1 subfamily. As to quaternary structure, interacts with PCNA. PCNA stimulates the nuclease activity without altering cleavage specificity. Mg(2+) serves as cofactor.

Its function is as follows. Structure-specific nuclease with 5'-flap endonuclease and 5'-3' exonuclease activities involved in DNA replication and repair. During DNA replication, cleaves the 5'-overhanging flap structure that is generated by displacement synthesis when DNA polymerase encounters the 5'-end of a downstream Okazaki fragment. Binds the unpaired 3'-DNA end and kinks the DNA to facilitate 5' cleavage specificity. Cleaves one nucleotide into the double-stranded DNA from the junction in flap DNA, leaving a nick for ligation. Also involved in the base excision repair (BER) pathway. Acts as a genome stabilization factor that prevents flaps from equilibrating into structures that lead to duplications and deletions. Also possesses 5'-3' exonuclease activity on nicked or gapped double-stranded DNA. The chain is Flap endonuclease 1 from Methanocaldococcus jannaschii (strain ATCC 43067 / DSM 2661 / JAL-1 / JCM 10045 / NBRC 100440) (Methanococcus jannaschii).